A 206-amino-acid chain; its full sequence is Large ribosomal subunit protein uL4 (206 aa).

The disordered stretch occupies residues 45–85 (QGNRAQKDREQVKHTTKKPWRQKGTGRARAGMSSSPLWRGG). Residues 58–70 (HTTKKPWRQKGTG) show a composition bias toward basic residues.

It belongs to the universal ribosomal protein uL4 family. Part of the 50S ribosomal subunit.

Functionally, one of the primary rRNA binding proteins, this protein initially binds near the 5'-end of the 23S rRNA. It is important during the early stages of 50S assembly. It makes multiple contacts with different domains of the 23S rRNA in the assembled 50S subunit and ribosome. In terms of biological role, forms part of the polypeptide exit tunnel. This is Large ribosomal subunit protein uL4 from Burkholderia mallei (strain NCTC 10247).